We begin with the raw amino-acid sequence, 402 residues long: Flavohemoprotein (402 aa).

Residues 1–136 form the Globin domain; the sequence is MLSEKTIEIV…IADAFISIEA (136 aa). Heme b is bound at residue His-85. Catalysis depends on charge relay system residues Tyr-95 and Glu-135. Residues 147 to 402 are reductase; sequence GGWKDFRNFV…EFFGPAASLQ (256 aa). The FAD-binding FR-type domain maps to 150-260; it reads KDFRNFVVVK…SAPAGDFVLN (111 aa). FAD-binding positions include Tyr-188 and 204 to 207; that span reads RQYS. 273-278 is a binding site for NADP(+); it reads GVGITP. An FAD-binding site is contributed by 394 to 397; sequence FFGP.

Belongs to the globin family. Two-domain flavohemoproteins subfamily. The protein in the C-terminal section; belongs to the flavoprotein pyridine nucleotide cytochrome reductase family. Heme b is required as a cofactor. The cofactor is FAD.

It carries out the reaction 2 nitric oxide + NADPH + 2 O2 = 2 nitrate + NADP(+) + H(+). It catalyses the reaction 2 nitric oxide + NADH + 2 O2 = 2 nitrate + NAD(+) + H(+). Its function is as follows. Is involved in NO detoxification in an aerobic process, termed nitric oxide dioxygenase (NOD) reaction that utilizes O(2) and NAD(P)H to convert NO to nitrate, which protects the bacterium from various noxious nitrogen compounds. Therefore, plays a central role in the inducible response to nitrosative stress. The protein is Flavohemoprotein of Bacillus cereus (strain ATCC 10987 / NRS 248).